A 90-amino-acid chain; its full sequence is Small ribosomal subunit protein bS20 (90 aa).

Over residues 1–11 the composition is skewed to basic and acidic residues; it reads MANIKSSEKDI. Disordered stretches follow at residues 1-29 and 69-90; these read MANI…SRLR and SKNA…SAAA.

Belongs to the bacterial ribosomal protein bS20 family.

In terms of biological role, binds directly to 16S ribosomal RNA. This Leptospira borgpetersenii serovar Hardjo-bovis (strain L550) protein is Small ribosomal subunit protein bS20.